A 417-amino-acid polypeptide reads, in one-letter code: Serine hydroxymethyltransferase (417 aa).

Residues leucine 121 and 125–127 (GHL) each bind (6S)-5,6,7,8-tetrahydrofolate. Lysine 229 is subject to N6-(pyridoxal phosphate)lysine. Residue 355 to 357 (SPF) participates in (6S)-5,6,7,8-tetrahydrofolate binding.

Belongs to the SHMT family. Homodimer. Requires pyridoxal 5'-phosphate as cofactor.

It is found in the cytoplasm. It carries out the reaction (6R)-5,10-methylene-5,6,7,8-tetrahydrofolate + glycine + H2O = (6S)-5,6,7,8-tetrahydrofolate + L-serine. Its pathway is one-carbon metabolism; tetrahydrofolate interconversion. The protein operates within amino-acid biosynthesis; glycine biosynthesis; glycine from L-serine: step 1/1. Catalyzes the reversible interconversion of serine and glycine with tetrahydrofolate (THF) serving as the one-carbon carrier. This reaction serves as the major source of one-carbon groups required for the biosynthesis of purines, thymidylate, methionine, and other important biomolecules. Also exhibits THF-independent aldolase activity toward beta-hydroxyamino acids, producing glycine and aldehydes, via a retro-aldol mechanism. In Edwardsiella ictaluri (strain 93-146), this protein is Serine hydroxymethyltransferase.